The following is a 31-amino-acid chain: Photosystem II reaction center protein T (31 aa).

Residues 3 to 23 form a helical membrane-spanning segment; the sequence is AIVYTFLLVGTLGIIFFAIFF.

The protein belongs to the PsbT family. In terms of assembly, PSII is composed of 1 copy each of membrane proteins PsbA, PsbB, PsbC, PsbD, PsbE, PsbF, PsbH, PsbI, PsbJ, PsbK, PsbL, PsbM, PsbT, PsbY, PsbZ, Psb30/Ycf12, at least 3 peripheral proteins of the oxygen-evolving complex and a large number of cofactors. It forms dimeric complexes.

The protein resides in the plastid. It is found in the chloroplast thylakoid membrane. Its function is as follows. Found at the monomer-monomer interface of the photosystem II (PS II) dimer, plays a role in assembly and dimerization of PSII. PSII is a light-driven water plastoquinone oxidoreductase, using light energy to abstract electrons from H(2)O, generating a proton gradient subsequently used for ATP formation. In Ostreococcus tauri, this protein is Photosystem II reaction center protein T.